The primary structure comprises 299 residues: Acetylglutamate kinase (299 aa).

Substrate contacts are provided by residues 64-65 (GG), Arg-86, and Asn-197.

This sequence belongs to the acetylglutamate kinase family. ArgB subfamily.

The protein localises to the cytoplasm. The catalysed reaction is N-acetyl-L-glutamate + ATP = N-acetyl-L-glutamyl 5-phosphate + ADP. It functions in the pathway amino-acid biosynthesis; L-arginine biosynthesis; N(2)-acetyl-L-ornithine from L-glutamate: step 2/4. Catalyzes the ATP-dependent phosphorylation of N-acetyl-L-glutamate. The polypeptide is Acetylglutamate kinase (Persephonella marina (strain DSM 14350 / EX-H1)).